The sequence spans 601 residues: Glutathione-regulated potassium-efflux system protein KefB (601 aa).

13 helical membrane passes run 4 to 24 (SDFL…VPLA), 29 to 49 (IGAV…GLGF), 55 to 75 (EILH…GLEL), 87 to 107 (IFGV…GLLM), 115 to 135 (AAVV…LQLM), 152 to 172 (VLLF…LLAG), 177 to 197 (HFDW…LIGG), 207 to 227 (FIAA…LVLG), 230 to 250 (LFMD…GVLL), 268 to 288 (GLLL…GVLY), 291 to 311 (LLWV…VLYL), 324 to 344 (MQFA…FSSA), and 356 to 376 (ALLL…MKLV). The RCK N-terminal domain maps to 400-519 (KPQVIVVGFG…AGVTQFSRET (120 aa)).

This sequence belongs to the monovalent cation:proton antiporter 2 (CPA2) transporter (TC 2.A.37) family. KefB subfamily. In terms of assembly, interacts with the regulatory subunit KefG.

It is found in the cell inner membrane. In terms of biological role, pore-forming subunit of a potassium efflux system that confers protection against electrophiles. Catalyzes K(+)/H(+) antiport. The polypeptide is Glutathione-regulated potassium-efflux system protein KefB (Escherichia coli O127:H6 (strain E2348/69 / EPEC)).